A 275-amino-acid chain; its full sequence is uncharacterized protein (275 aa).

Residues 20 to 22 (RAQ), 41 to 42 (DI), 80 to 81 (DI), and Asn107 each bind NAD(+). Ser160 lines the substrate pocket. Catalysis depends on Tyr173, which acts as the Proton acceptor. Residues Lys177 and 206-208 (VDT) each bind NAD(+).

The protein belongs to the short-chain dehydrogenases/reductases (SDR) family.

This is an uncharacterized protein from Mycobacterium tuberculosis (strain CDC 1551 / Oshkosh).